The following is a 358-amino-acid chain: PDZ and LIM domain protein 3 (358 aa).

The region spanning 1–84 (MPQNVLLPGP…QLCLKIDRAE (84 aa)) is the PDZ domain. 2 disordered regions span residues 126–155 (FILP…SVST) and 237–274 (DTEH…RAPV). A compositionally biased stretch (low complexity) spans 129-146 (PGRSSGSSTPSGFDPGSG). An LIM zinc-binding domain is found at 288-347 (PICDRCGNGIVGTVVKAKDKLRHPDCFVCSDCNLNLKQKGYFFVEGQLYCEAHARARMRP).

The protein localises to the cytoplasm. Its subcellular location is the myofibril. It is found in the sarcomere. The protein resides in the z line. In terms of biological role, may play a role in the organization of actin filament arrays within muscle cells. The chain is PDZ and LIM domain protein 3 (pdlim3) from Xenopus laevis (African clawed frog).